The sequence spans 228 residues: UPF0173 metal-dependent hydrolase RBAM_026340 (228 aa).

The protein belongs to the UPF0173 family.

This Bacillus velezensis (strain DSM 23117 / BGSC 10A6 / LMG 26770 / FZB42) (Bacillus amyloliquefaciens subsp. plantarum) protein is UPF0173 metal-dependent hydrolase RBAM_026340.